We begin with the raw amino-acid sequence, 1106 residues long: GYF domain-containing protein gyf-1 (1106 aa).

The segment covering 1-17 (MSSVSSAEPTAQQNFNP) has biased composition (polar residues). 3 disordered regions span residues 1–50 (MSSV…GGFD), 160–370 (GALQ…DSTV), and 383–434 (KAST…SAWS). A compositionally biased stretch (low complexity) spans 30–42 (RGGSISSGNNRSS). The segment covering 162-180 (LQNGQSPTSRWAPKSSWNK) has biased composition (polar residues). Residues 207 to 224 (GRGGGRIGGENGFGGATN) are compositionally biased toward gly residues. The span at 229–243 (AAQNEDSPGTYQSKF) shows a compositional bias: polar residues. The segment covering 248 to 261 (RGGGAGSVGRGGST) has biased composition (gly residues). Positions 306 to 322 (VGSTSRTSTNAAPQSSE) are enriched in polar residues. 2 stretches are compositionally biased toward low complexity: residues 334–353 (QRTQ…QQAQ) and 390–410 (PPQQ…APSR). The 50-residue stretch at 459 to 508 (PVQFYYMDPTETRRGPFPKDQMNVWFKAGYFTDESLRVQRGENGEYKTIG) folds into the GYF domain. A coiled-coil region spans residues 584-746 (LDDHNRRLAE…ERKRAAERER (163 aa)). Disordered regions lie at residues 778–811 (AFTG…KTAP), 909–928 (KNSQ…SAKV), 1026–1076 (AGGR…DGNI), and 1087–1106 (RLNK…PSRR). Residues 786–801 (VSPSGSEESDEWISTS) are compositionally biased toward polar residues. A compositionally biased stretch (low complexity) spans 1046–1057 (SDSNSGSNSNSG).

This Caenorhabditis elegans protein is GYF domain-containing protein gyf-1.